Consider the following 218-residue polypeptide: Small ribosomal subunit protein uS3c (218 aa).

A KH type-2 domain is found at 47-118 (VQKNIRISSG…KLNIAITRIS (72 aa)).

This sequence belongs to the universal ribosomal protein uS3 family. Part of the 30S ribosomal subunit.

Its subcellular location is the plastid. The protein localises to the chloroplast. The sequence is that of Small ribosomal subunit protein uS3c (rps3) from Nasturtium officinale (Watercress).